Reading from the N-terminus, the 132-residue chain is MSKIDTIIEMIEGLNVLELVELKKKMEEKWGVTAAAPVMAMGVAAPVAAAGDGAAAAAPAEEKTEFDVILKEAGPNKIQVIKVVRELTSLGLKEAKDLVEGAPKPVREGVSKEEAEAAKAKLTEVGAVVEIK.

Belongs to the bacterial ribosomal protein bL12 family. As to quaternary structure, homodimer. Part of the ribosomal stalk of the 50S ribosomal subunit. Forms a multimeric L10(L12)X complex, where L10 forms an elongated spine to which 2 to 4 L12 dimers bind in a sequential fashion. Binds GTP-bound translation factors.

Functionally, forms part of the ribosomal stalk which helps the ribosome interact with GTP-bound translation factors. Is thus essential for accurate translation. This is Large ribosomal subunit protein bL12 from Chloroflexus aggregans (strain MD-66 / DSM 9485).